The primary structure comprises 113 residues: Class I hydrophobin POH1 (113 aa).

The N-terminal stretch at 1-26 (MFSIRISTVVLAASALLAVAIPMTNT) is a signal peptide. 4 disulfides stabilise this stretch: C31–C93, C38–C87, C39–C74, and C94–C107.

Belongs to the fungal hydrophobin family. In terms of assembly, self-assembles to form functional amyloid fibrils called rodlets. Self-assembly into fibrillar rodlets occurs spontaneously at hydrophobic:hydrophilic interfaces and the rodlets further associate laterally to form amphipathic monolayers. In terms of tissue distribution, expressed in the fruiting bodies but not in vegetative mycelium.

Its subcellular location is the secreted. It localises to the cell wall. Functionally, aerial growth, conidiation, and dispersal of filamentous fungi in the environment rely upon a capability of their secreting small amphipathic proteins called hydrophobins (HPBs) with low sequence identity. Class I can self-assemble into an outermost layer of rodlet bundles on aerial cell surfaces, conferring cellular hydrophobicity that supports fungal growth, development and dispersal; whereas Class II form highly ordered films at water-air interfaces through intermolecular interactions but contribute nothing to the rodlet structure. POH1 is a class I hydrophobin that is involved in the formation of mycelium knots and subsequent fruiting bodies. The polypeptide is Class I hydrophobin POH1 (Pleurotus ostreatus (Oyster mushroom)).